Reading from the N-terminus, the 689-residue chain is MAGVSAVRWLGLRSRLGQPLTGRRAGLCKQARSCRFYSGSATLSKVEGTDITGIEEVVIPKKKTWDKVAVLQALASTVNRDTTSVPYVFQDDPYLIPASSLESRLFLLAKKSGENVAKFIINSYPKYFQKDIAEPHIPCLMPEYFEPQIKDISEAALKERIELRKVKASVDMFDQLLQAGTTVSLETTNSLLDLLCYFGDQEPSTDYHFQQTEQSEALEVENDETSRRKAGHQFGVTWQAKNNAERIFSLMPEKNAHSYCTMIRGMVKHRAYEQALNLYTELLNNRLHADVYTFNALTEATVCVINGKFEEKWSKIQELLRHMVAQKVKPNLQTFNTILKCLRRFHVFARSPALRILREMKAIGIEPSLATYHHIIHVFDQPGDPLKRSSFIIYDIMNELMGKRFSPKDPDDDKFFQSAMSICSSLRDLELAYQVHGLLNTGDNWKFIGPDHHRNFYYSKFFDLICLMEQIDVTLKWYEDLIPSVYFPHSQTLIHLLQALDVANRLEMIPKIWKDSKEYGHTFRSDLREEILKLMARDKHPPELQVAFADCAADIKSAYESQHIRQTAQDWPATSLYCIAILFLRAGRTQEAWNMLELFRKHNKIPRSELLNELMDSAKVSNSPSQAIEVVELASAFSLPICEGLTQRVMSDFAINQEQKEALGNLTALTSDSDTDSSSDSDSDTSEGK.

A mitochondrion-targeting transit peptide spans 1–37; the sequence is MAGVSAVRWLGLRSRLGQPLTGRRAGLCKQARSCRFY. Position 126 is an N6-acetyllysine (Lys-126). PPR repeat units lie at residues 149 to 183, 184 to 219, 255 to 289, 290 to 330, 331 to 367, 368 to 404, 412 to 446, 454 to 488, 489 to 523, and 572 to 606; these read IKDISEAALKERIELRKVKASVDMFDQLLQAGTTV, SLETTNSLLDLLCYFGDQEPSTDYHFQQTEQSEALE, NAHSYCTMIRGMVKHRAYEQALNLYTELLNNRLHA, DVYT…KVKP, NLQTFNTILKCLRRFHVFARSPALRILREMKAIGIEP, SLATYHHIIHVFDQPGDPLKRSSFIIYDIMNELMGKR, DDKFFQSAMSICSSLRDLELAYQVHGLLNTGDNWK, RNFYYSKFFDLICLMEQIDVTLKWYEDLIPSVYFP, HSQTLIHLLQALDVANRLEMIPKIWKDSKEYGHTF, and PATSLYCIAILFLRAGRTQEAWNMLELFRKHNKIP. The interval 665 to 689 is disordered; sequence NLTALTSDSDTDSSSDSDSDTSEGK. Positions 673–689 are enriched in acidic residues; it reads SDTDSSSDSDSDTSEGK.

It belongs to the mitochondrion-specific ribosomal protein mS39 family. In terms of assembly, component of the mitochondrial ribosome small subunit (28S) which comprises a 12S rRNA and about 30 distinct proteins. Associated with the 12S mitochondrial rRNA (12S mt-rRNA).

The protein resides in the mitochondrion. Functionally, mitochondrial RNA-binding protein that has a role in mitochondrial translation. This Pongo abelii (Sumatran orangutan) protein is Small ribosomal subunit protein mS39 (PTCD3).